We begin with the raw amino-acid sequence, 148 residues long: Snaclec B1 (148 aa).

The first 24 residues, 1–24, serve as a signal peptide directing secretion; it reads MGRIIFVSFGLLVVFLSLSGTGAA. 3 disulfide bridges follow: Cys27–Cys38, Cys55–Cys144, and Cys121–Cys136. The C-type lectin domain occupies 34-145; sequence YDQHCYKVFD…CRLLGHFVCK (112 aa).

This sequence belongs to the snaclec family. In terms of assembly, heterodimer; disulfide-linked. Expressed by the venom gland.

The protein resides in the secreted. Functionally, interferes with one step of hemostasis (modulation of platelet aggregation, or coagulation cascade, for example). This Macrovipera lebetinus (Levantine viper) protein is Snaclec B1.